The following is a 372-amino-acid chain: O-glycoside alpha-1,2-mannosyltransferase homolog 2 (372 aa).

Residues M1–L6 are Cytoplasmic-facing. The chain crosses the membrane as a helical; Signal-anchor for type II membrane protein span at residues L7–I27. Residues P28–L372 lie on the Lumenal side of the membrane. E271 serves as the catalytic Nucleophile.

This sequence belongs to the glycosyltransferase 15 family.

The protein resides in the endoplasmic reticulum membrane. Its function is as follows. Probable mannosyltransferase involved in O-glycosylation of cell wall and secreted proteins. This is O-glycoside alpha-1,2-mannosyltransferase homolog 2 (omh2) from Schizosaccharomyces pombe (strain 972 / ATCC 24843) (Fission yeast).